Here is a 1296-residue protein sequence, read N- to C-terminus: Clustered mitochondria protein homolog (1296 aa).

The segment at 1 to 31 (MTLMNGDGAHEHQAEAEPKQNGHEMGDQTEE) is disordered. Residues 8–26 (GAHEHQAEAEPKQNGHEMG) show a composition bias toward basic and acidic residues. The region spanning 333–575 (RAEDAYTSRL…RTFPPDLNFL (243 aa)) is the Clu domain. Residues 662–689 (LDGEAQLKQLEETMAAHKETVDTRSKEV) are a coiled coil. TPR repeat units follow at residues 970–1003 (AFHF…FNNV), 1012–1045 (CACL…SERI), 1096–1129 (ALLD…NSKY), and 1138–1171 (ALSH…YKNQ). A coiled-coil region spans residues 1242 to 1274 (QKDLEHLKAEVQRRQQLQEAIKGAENHEAKTKE). Residues 1261 to 1296 (AIKGAENHEAKTKEPEMSETSDSNINAASVAPESSD) form a disordered region. The span at 1263–1276 (KGAENHEAKTKEPE) shows a compositional bias: basic and acidic residues. Polar residues predominate over residues 1278–1296 (SETSDSNINAASVAPESSD).

It belongs to the CLU family.

The protein localises to the cytoplasm. It is found in the cytoplasmic granule. In terms of biological role, mRNA-binding protein involved in proper cytoplasmic distribution of mitochondria. Specifically binds mRNAs of nuclear-encoded mitochondrial proteins in the cytoplasm and regulates transport or translation of these transcripts close to mitochondria, playing a role in mitochondrial biogenesis. The polypeptide is Clustered mitochondria protein homolog (Xenopus tropicalis (Western clawed frog)).